A 473-amino-acid chain; its full sequence is H(+)/Cl(-) exchange transporter ClcA (473 aa).

Residues 1-32 are Cytoplasmic-facing; that stretch reads MKTDTSTFLAQQIVRLRRRDQIRRLMQRDKTP. Residues 33–69 form a helical membrane-spanning segment; the sequence is LAILFMAAVVGTLTGLVGVAFEKAVSWVQNMRIGALV. Residues 70 to 76 lie on the Periplasmic side of the membrane; sequence QVADHAF. Residues 77–100 traverse the membrane as a helical segment; it reads LLWPLAFILSALLAMVGYFLVRKF. The short motif at 106 to 110 is the Selectivity filter part_1 element; sequence GSGIP. Ser107 contributes to the chloride binding site. An intramembrane region (helical) is located at residues 109 to 116; sequence IPEIEGAL. At 117–123 the chain is on the cytoplasmic side; it reads EELRPVR. The next 2 membrane-spanning stretches (helical) occupy residues 124 to 141 and 148 to 166; these read WWRV…TLGA and EGPT…LDVF. A Selectivity filter part_2 motif is present at residues 146-150; it reads GREGP. At 167–176 the chain is on the cytoplasmic side; sequence RMRSAEARHT. 2 intramembrane regions (helical) span residues 177–189 and 193–201; these read LLAT…LSAA and PLAGILFII. Topologically, residues 202–214 are cytoplasmic; the sequence is EEMRPQFRYNLIS. The chain crosses the membrane as a helical span at residues 215 to 232; sequence IKAVFTGVIMSSIVFRIF. Residues 233–252 are Periplasmic-facing; that stretch reads NGEAPIIEVGKLSDAPVNTL. Residues 253–281 form a helical membrane-spanning segment; sequence WLYLILGIIFGCVGPVFNSLVLRTQDMFQ. The Cytoplasmic portion of the chain corresponds to 282 to 287; that stretch reads RFHGGE. The helical transmembrane segment at 288-309 threads the bilayer; that stretch reads IKKWVLMGGAIGGLCGILGLIE. The Periplasmic segment spans residues 310 to 329; it reads PEAAGGGFNLIPIAAAGNFS. 2 consecutive transmembrane segments (helical) span residues 330-349 and 355-376; these read VGLL…LCFS and GIFA…MAAA. Positions 355-359 match the Selectivity filter part_3 motif; that stretch reads GIFAP. Chloride-binding residues include Ile356 and Phe357. Over 377-386 the chain is Periplasmic; sequence VLFPQYHLEA. The segment at residues 387–401 is an intramembrane region (helical); it reads GTFAIAGMGALMAAS. The note=Loop between two helices intramembrane region spans 402–404; it reads VRA. Positions 405 to 416 form an intramembrane region, helical; that stretch reads PLTGIVLVLEMT. The segment at residues 417 to 421 is an intramembrane region (note=Loop between two helices); sequence DNYQL. A helical transmembrane segment spans residues 422-438; it reads ILPMIITCLGATLLAQF. At 439-473 the chain is on the cytoplasmic side; sequence LGGKPLYSTILARTLAKQDAEQAAKSQNAPAGENT. Tyr445 contributes to the chloride binding site.

Belongs to the chloride channel (TC 2.A.49) family. ClcA subfamily. Homodimer.

The protein localises to the cell inner membrane. The enzyme catalyses 2 chloride(in) + H(+)(out) = 2 chloride(out) + H(+)(in). Proton-coupled chloride transporter. Functions as antiport system and exchanges two chloride ions for 1 proton. Probably acts as an electrical shunt for an outwardly-directed proton pump that is linked to amino acid decarboxylation, as part of the extreme acid resistance (XAR) response. In Salmonella gallinarum (strain 287/91 / NCTC 13346), this protein is H(+)/Cl(-) exchange transporter ClcA.